We begin with the raw amino-acid sequence, 424 residues long: Tubby protein homolog 1 (424 aa).

A disordered region spans residues 19–47; that stretch reads MLEDKQKQKRHQSAGSVRTTTTTSSMSMN. Over residues 37-47 the composition is skewed to low complexity; the sequence is TTTTTSSMSMN.

This sequence belongs to the TUB family. Interacts with rgb-3.

Its subcellular location is the cytoplasm. It is found in the cell projection. It localises to the axon. The protein localises to the dendrite. The protein resides in the cilium. Functionally, has a role in fat regulation independent of daf-16. Implicated in ciliar sensory function which is required for normal sensory behavior such as chemotaxis. Functions in life span control via the insulin/IGF-1 pathway. Thought to be involved in neuronal trafficking. In Caenorhabditis briggsae, this protein is Tubby protein homolog 1.